The chain runs to 237 residues: Large ribosomal subunit protein uL2 (237 aa).

The span at 1-11 (MGKRIISQNRG) shows a compositional bias: polar residues. Disordered regions lie at residues 1–20 (MGKR…YRAP) and 201–237 (FGGG…GVRR).

It belongs to the universal ribosomal protein uL2 family. Part of the 50S ribosomal subunit. Forms a bridge to the 30S subunit in the 70S ribosome.

Functionally, one of the primary rRNA binding proteins. Required for association of the 30S and 50S subunits to form the 70S ribosome, for tRNA binding and peptide bond formation. It has been suggested to have peptidyltransferase activity; this is somewhat controversial. Makes several contacts with the 16S rRNA in the 70S ribosome. This is Large ribosomal subunit protein uL2 from Archaeoglobus fulgidus (strain ATCC 49558 / DSM 4304 / JCM 9628 / NBRC 100126 / VC-16).